We begin with the raw amino-acid sequence, 256 residues long: Gamma carbonic anhydrase-like 2, mitochondrial (256 aa).

Residues 1–33 (MATSLARISKRSITSAVSSNLIRRYFAAEAVAV) constitute a mitochondrion transit peptide. Substrate is bound by residues 103 to 105 (RGD) and 118 to 119 (QE). H124 provides a ligand contact to Zn(2+). Positions 152, 164, and 231 each coordinate substrate.

Belongs to the gamma-class carbonic anhydrase family. In terms of assembly, component of the mitochondrial oxidoreductase respiratory chain complex I; element of the extra matrix-exposed domain, which is attached to the membrane arm of this complex. Interacts with GAMMACA2.

It localises to the mitochondrion membrane. In terms of biological role, involved in complex I assembly in mitochondria and respiration. The sequence is that of Gamma carbonic anhydrase-like 2, mitochondrial (GAMMACAL2) from Arabidopsis thaliana (Mouse-ear cress).